A 287-amino-acid chain; its full sequence is Oxaloacetate decarboxylase (287 aa).

Position 50 (S50) interacts with substrate. Position 88 (D88) interacts with Mg(2+). Residues R159 and H235 each coordinate substrate.

Belongs to the isocitrate lyase/PEP mutase superfamily. Oxaloacetate decarboxylase family. As to quaternary structure, homotetramer; dimer of dimers. It depends on Mg(2+) as a cofactor.

The enzyme catalyses oxaloacetate + H(+) = pyruvate + CO2. Functionally, catalyzes the decarboxylation of oxaloacetate into pyruvate. Seems to play a role in maintaining cellular concentrations of bicarbonate and pyruvate. The sequence is that of Oxaloacetate decarboxylase from Marinomonas sp. (strain MWYL1).